Consider the following 526-residue polypeptide: Rho guanine nucleotide exchange factor 3 (526 aa).

The segment at 20–40 is disordered; the sequence is ELPPASGPAKDAEEPSNKRVK. Residues Ser-47 and Ser-70 each carry the phosphoserine modification. Positions 122-304 constitute a DH domain; it reads KRQEAIFELS…QGIVAEINTK (183 aa). Residues 291-449 enclose the PH domain; the sequence is INIIQGIVAE…WLNCIRQAKE (159 aa). Disordered stretches follow at residues 464–502 and 507–526; these read EGSFLNPTTGSRELQGETKLEQMDQSDSESDCSMDTSEV and EHMEQTDSSCGNSRHGESNV. A compositionally biased stretch (polar residues) spans 466–475; sequence SFLNPTTGSR.

In terms of assembly, interacts with RHOA and RHOB.

It is found in the cytoplasm. Acts as a guanine nucleotide exchange factor (GEF) for RhoA and RhoB GTPases. The sequence is that of Rho guanine nucleotide exchange factor 3 (ARHGEF3) from Macaca fascicularis (Crab-eating macaque).